The sequence spans 541 residues: 5' exonuclease Apollo (541 aa).

A Glycyl lysine isopeptide (Lys-Gly) (interchain with G-Cter in SUMO2) cross-link involves residue Lys-334. The segment at 455 to 475 (PLLSRGDSGSPARGNQSDCVG) is disordered. Positions 492-507 (ESRGLALKYLLTPVHF) match the TBM motif.

Belongs to the DNA repair metallo-beta-lactamase (DRMBL) family. Interacts with MUS81, MRE11 and FANCD2. Interacts with HSPA2, HSPA8 and HSPA14. Interacts with SPAG5. Interacts with TERF2; the interaction is direct. Post-translationally, ubiquitinated, leading to its degradation. Interaction with TERF2 protects it from ubiquitination.

The protein localises to the chromosome. It is found in the telomere. Its subcellular location is the nucleus. It localises to the cytoplasm. The protein resides in the cytoskeleton. The protein localises to the microtubule organizing center. It is found in the centrosome. It catalyses the reaction a beta-lactam + H2O = a substituted beta-amino acid. In terms of biological role, 5'-3' exonuclease that plays a central role in telomere maintenance and protection during S-phase. Participates in the protection of telomeres against non-homologous end-joining (NHEJ)-mediated repair, thereby ensuring that telomeres do not fuse. Plays a key role in telomeric loop (T loop) formation by being recruited by TERF2 at the leading end telomeres and by processing leading-end telomeres immediately after their replication via its exonuclease activity: generates 3' single-stranded overhang at the leading end telomeres avoiding blunt leading-end telomeres that are vulnerable to end-joining reactions and expose the telomere end in a manner that activates the DNA repair pathways. Together with TERF2, required to protect telomeres from replicative damage during replication by controlling the amount of DNA topoisomerase (TOP1, TOP2A and TOP2B) needed for telomere replication during fork passage and prevent aberrant telomere topology. Also involved in response to DNA damage: plays a role in response to DNA interstrand cross-links (ICLs) by facilitating double-strand break formation. In case of spindle stress, involved in prophase checkpoint. Possesses beta-lactamase activity, catalyzing the hydrolysis of penicillin G and nitrocefin. Exhibits no activity towards other beta-lactam antibiotic classes including cephalosporins (cefotaxime) and carbapenems (imipenem). This is 5' exonuclease Apollo (Dclre1b) from Mus musculus (Mouse).